A 207-amino-acid polypeptide reads, in one-letter code: MTDCRLYLITPPAFDPQAFAPTLAAALDAGDVACVQLRLKDAPDEAILRAVEVLRPLVQARDVAFILNDRPDLAARSGCDGVHVGQEDTPYREARRLVGADAIVGVTCHDSRHLAMVAGEEGADYVAFGAFFPTGTKEPKTTADPEILTWWQEMMEVPCVAIGGITVETAPLLVQAGADFLAVCGGVWNHPAGPAAAVADFNRVMRG.

4-amino-2-methyl-5-(diphosphooxymethyl)pyrimidine contacts are provided by residues 36–40 (QLRLK) and asparagine 68. Residues aspartate 69 and aspartate 88 each coordinate Mg(2+). Threonine 107 contacts 4-amino-2-methyl-5-(diphosphooxymethyl)pyrimidine. A 2-[(2R,5Z)-2-carboxy-4-methylthiazol-5(2H)-ylidene]ethyl phosphate-binding site is contributed by 134 to 136 (TGT). Position 137 (lysine 137) interacts with 4-amino-2-methyl-5-(diphosphooxymethyl)pyrimidine. Glycine 164 lines the 2-[(2R,5Z)-2-carboxy-4-methylthiazol-5(2H)-ylidene]ethyl phosphate pocket.

The protein belongs to the thiamine-phosphate synthase family. Requires Mg(2+) as cofactor.

It carries out the reaction 2-[(2R,5Z)-2-carboxy-4-methylthiazol-5(2H)-ylidene]ethyl phosphate + 4-amino-2-methyl-5-(diphosphooxymethyl)pyrimidine + 2 H(+) = thiamine phosphate + CO2 + diphosphate. It catalyses the reaction 2-(2-carboxy-4-methylthiazol-5-yl)ethyl phosphate + 4-amino-2-methyl-5-(diphosphooxymethyl)pyrimidine + 2 H(+) = thiamine phosphate + CO2 + diphosphate. The catalysed reaction is 4-methyl-5-(2-phosphooxyethyl)-thiazole + 4-amino-2-methyl-5-(diphosphooxymethyl)pyrimidine + H(+) = thiamine phosphate + diphosphate. The protein operates within cofactor biosynthesis; thiamine diphosphate biosynthesis; thiamine phosphate from 4-amino-2-methyl-5-diphosphomethylpyrimidine and 4-methyl-5-(2-phosphoethyl)-thiazole: step 1/1. Its function is as follows. Condenses 4-methyl-5-(beta-hydroxyethyl)thiazole monophosphate (THZ-P) and 2-methyl-4-amino-5-hydroxymethyl pyrimidine pyrophosphate (HMP-PP) to form thiamine monophosphate (TMP). The chain is Thiamine-phosphate synthase from Rhodospirillum centenum (strain ATCC 51521 / SW).